A 372-amino-acid chain; its full sequence is Ligninase C (372 aa).

The N-terminal stretch at 1 to 26 (MAFKSLLSFVSVIGALQGANAALTRR) is a signal peptide. His-74 serves as the catalytic Proton acceptor. Positions 75, 93, 95, and 97 each coordinate Ca(2+). Asn-129 carries N-linked (GlcNAc...) asparagine glycosylation. Residue His-205 coordinates heme b. Thr-206, Asp-223, Thr-225, Leu-228, and Asp-230 together coordinate Ca(2+). Residues 346–372 (TPFPTFPTDPGPKTAVAPVPKPPAARK) are disordered.

Belongs to the peroxidase family. Ligninase subfamily. Ca(2+) is required as a cofactor. Heme b serves as cofactor.

It catalyses the reaction 1-(3,4-dimethoxyphenyl)-2-(2-methoxyphenoxy)propane-1,3-diol + H2O2 = 3,4-dimethoxybenzaldehyde + guaiacol + glycolaldehyde + H2O. The enzyme catalyses 2 (3,4-dimethoxyphenyl)methanol + H2O2 = 2 (3,4-dimethoxyphenyl)methanol radical + 2 H2O. It functions in the pathway secondary metabolite metabolism; lignin degradation. Functionally, depolymerization of lignin. Catalyzes the C(alpha)-C(beta) cleavage of the propyl side chains of lignin. This chain is Ligninase C, found in Trametes versicolor (White-rot fungus).